An 865-amino-acid polypeptide reads, in one-letter code: Valine--tRNA ligase (865 aa).

Residues 43-53 carry the 'HIGH' region motif; it reads PNITGRIHMGH. The 'KMSKS' region signature appears at 523–527; that stretch reads KMSKS. Residue Lys526 coordinates ATP. The stretch at 797-865 forms a coiled coil; the sequence is GLIDFEKEKE…RLESILRDLE (69 aa).

This sequence belongs to the class-I aminoacyl-tRNA synthetase family. ValS type 1 subfamily. Monomer.

It localises to the cytoplasm. The catalysed reaction is tRNA(Val) + L-valine + ATP = L-valyl-tRNA(Val) + AMP + diphosphate. In terms of biological role, catalyzes the attachment of valine to tRNA(Val). As ValRS can inadvertently accommodate and process structurally similar amino acids such as threonine, to avoid such errors, it has a 'posttransfer' editing activity that hydrolyzes mischarged Thr-tRNA(Val) in a tRNA-dependent manner. This is Valine--tRNA ligase from Thermotoga maritima (strain ATCC 43589 / DSM 3109 / JCM 10099 / NBRC 100826 / MSB8).